The following is an 88-amino-acid chain: Small ribosomal subunit protein uS15 (88 aa).

This sequence belongs to the universal ribosomal protein uS15 family. Part of the 30S ribosomal subunit. Forms a bridge to the 50S subunit in the 70S ribosome, contacting the 23S rRNA.

One of the primary rRNA binding proteins, it binds directly to 16S rRNA where it helps nucleate assembly of the platform of the 30S subunit by binding and bridging several RNA helices of the 16S rRNA. Its function is as follows. Forms an intersubunit bridge (bridge B4) with the 23S rRNA of the 50S subunit in the ribosome. This is Small ribosomal subunit protein uS15 from Mesomycoplasma flocculare (Mycoplasma flocculare).